The sequence spans 60 residues: Large ribosomal subunit protein uL30 (60 aa).

Belongs to the universal ribosomal protein uL30 family. In terms of assembly, part of the 50S ribosomal subunit.

This chain is Large ribosomal subunit protein uL30, found in Flavobacterium johnsoniae (strain ATCC 17061 / DSM 2064 / JCM 8514 / BCRC 14874 / CCUG 350202 / NBRC 14942 / NCIMB 11054 / UW101) (Cytophaga johnsonae).